Consider the following 313-residue polypeptide: Potassium channel subfamily K member 6 (313 aa).

Topologically, residues 1 to 4 are cytoplasmic; that stretch reads MRRG. Residues 5-25 form a helical membrane-spanning segment; sequence ALLASALAAYAGYLALGALLV. N-linked (GlcNAc...) asparagine glycosylation is found at Asn79 and Asn85. The segment at residues 90-115 is an intramembrane region (pore-forming); the sequence is AWDFASALFFASTLVTTVGYGYTTPL. K(+) is bound by residues Thr106, Val107, Gly108, and Tyr109. Positions 106–111 are selectivity filter 1; it reads TVGYGY. Residues 121–141 form a helical membrane-spanning segment; sequence AFSIVFALLGVPITMLLLTAS. Residues 142-172 lie on the Cytoplasmic side of the membrane; it reads AQRLSLLLTHAPLSWLSLHWGWPPQRAARWH. Residues 173–193 traverse the membrane as a helical segment; sequence LVALLMVIVAIFFLVPAAVFA. Residues 199–223 constitute an intramembrane region (pore-forming); the sequence is WSFLDAFYFCFISLSTIGLGDYVPG. K(+) is bound by residues Thr214, Ile215, and Gly216. Residues 214 to 219 form a selectivity filter 2 region; sequence TIGLGD. The helical transmembrane segment at 236–256 threads the bilayer; it reads VLVTAYLFLGLVAMVLVLQTF. The Cytoplasmic segment spans residues 257-313; the sequence is RRVSDLHGLTELILLPDPDPASLSQDEDDQVAVLDARTDLHQHLSAASHADYASIPR. Short sequence motifs (lysosomal targeting signal) lie at residues 282–290 and 308–312; these read DEDDQVAVL and YASIP.

It belongs to the two pore domain potassium channel (TC 1.A.1.8) family. In terms of assembly, homodimer; disulfide-linked. N-glycosylation is necessary for targeting to lysosomes.

Its subcellular location is the late endosome membrane. It localises to the lysosome membrane. The enzyme catalyses K(+)(in) = K(+)(out). In terms of biological role, k(+) channel that conducts outward rectifying currents at the membranes of the endolysosomal system. Active in lysosomes where it regulates lysosome numbers and size. In macrophages, enables K(+) efflux coupled to ATP-induced NLRP3 inflammasome activation upon bacterial infection. Cooperates with ATP-gated P2RX7 to activate NLRP3 inflammasome, with P2RX7 conducting Ca(2+) and Na(+) influx that sets the membrane potential for K(+) efflux. This Mus musculus (Mouse) protein is Potassium channel subfamily K member 6.